The chain runs to 162 residues: Peroxiredoxin-2D (162 aa).

Positions 4–162 constitute a Thioredoxin domain; sequence ITVGDVVPDG…SSAEDILKAL (159 aa). Cys51 acts as the Cysteine sulfenic acid (-SOH) intermediate in catalysis.

The protein belongs to the peroxiredoxin family. Prx5 subfamily. Monomer. Exclusively expressed in buds and flowers. Also detected in pollen.

It is found in the cytoplasm. It catalyses the reaction [glutaredoxin]-dithiol + a hydroperoxide = [glutaredoxin]-disulfide + an alcohol + H2O. Thiol-specific peroxidase that catalyzes the reduction of hydrogen peroxide and organic hydroperoxides to water and alcohols, respectively. Plays a role in cell protection against oxidative stress by detoxifying peroxides. May be involved in intracellular redox signaling. The polypeptide is Peroxiredoxin-2D (PRXIID) (Arabidopsis thaliana (Mouse-ear cress)).